A 561-amino-acid polypeptide reads, in one-letter code: AT-rich interactive domain-containing protein 3B (561 aa).

Position 1 is an N-acetylmethionine (methionine 1). A compositionally biased stretch (low complexity) spans 1–17 (MEPLQQQQQQQQQQQKQ). Disordered regions lie at residues 1–36 (MEPL…QQMR), 53–122 (LSAT…SKYF), and 136–179 (PMSN…WNLD). Serine 89 bears the Phosphoserine mark. Positions 90–109 (EPEEEDGGLEDEDGDDEVAE) are enriched in acidic residues. Over residues 152 to 162 (QAKEDHTKDAS) the composition is skewed to basic and acidic residues. Residues 164–178 (ASPSVSTAGQPNWNL) are compositionally biased toward polar residues. Serine 165 is modified (phosphoserine). The segment at 203 to 365 (SRDFAKLYEL…SPPKIRFPIL (163 aa)) is interaction with RB1. Residues 215–307 (DPERKEFLDD…YLYAYECEKK (93 aa)) form the ARID domain. The residue at position 311 (serine 311) is a Phosphoserine. Arginine 361 bears the Asymmetric dimethylarginine mark. The disordered stretch occupies residues 370–397 (SSGTNTSSPRISPATTLRKGDGAPVTTV). Residues 419–517 (AALEQLRERL…GVLFAQKPVV (99 aa)) form the REKLES domain. The tract at residues 490–513 (SSIGSINMSVDIDGTTYAGVLFAQ) is interaction with ARID3A. Over residues 523 to 552 (SAPQSLGSSASSSSSSHCSPSPTSSRGTPS) the composition is skewed to low complexity. The tract at residues 523 to 561 (SAPQSLGSSASSSSSSHCSPSPTSSRGTPSAEPSTSWSL) is disordered.

In terms of assembly, heterodimer with ARID3A. Interacts with unphosphorylated RB1. In terms of tissue distribution, expressed in placenta, testis and leukocytes. Expressed in neuroblastoma. Present in K-562 erythrocytic leukemia cell line (at protein level).

It is found in the nucleus. Its function is as follows. Transcription factor which may be involved in neuroblastoma growth and malignant transformation. Favors nuclear targeting of ARID3A. In Homo sapiens (Human), this protein is AT-rich interactive domain-containing protein 3B (ARID3B).